The sequence spans 299 residues: Homoserine O-acetyltransferase (299 aa).

The active-site Acyl-thioester intermediate is the C142. Substrate is bound by residues K163 and S192. Residue H235 is the Proton acceptor of the active site. E237 is an active-site residue. R249 serves as a coordination point for substrate.

It belongs to the MetA family.

Its subcellular location is the cytoplasm. The catalysed reaction is L-homoserine + acetyl-CoA = O-acetyl-L-homoserine + CoA. Its pathway is amino-acid biosynthesis; L-methionine biosynthesis via de novo pathway; O-acetyl-L-homoserine from L-homoserine: step 1/1. In terms of biological role, transfers an acetyl group from acetyl-CoA to L-homoserine, forming acetyl-L-homoserine. In Synechococcus elongatus (strain ATCC 33912 / PCC 7942 / FACHB-805) (Anacystis nidulans R2), this protein is Homoserine O-acetyltransferase.